The chain runs to 846 residues: MKRKSDSEQQPSVQCRKKKRIEELGLNLSSTSDDDTQYSNHGTQESSTSSTSSDSDNEEKRPVFGSGRNETLPDTLAEGSSSHYSMYNSVSQKLMAKMGFREGEGLGKFGQGRKEIVETSKQKGRRGLGMVLKGFEKELNINWRSEPEATAYEEVDWFPECTTDIPDSDELSDWMIVGKRKLIIDDETEFCRDNLLTSLLQCKSAFDELEGEEMRRARTRSNPYEMIRGVFFLNRAAMKMANIDHVFDYMFTNPKDSQGKPKLKDKESELLYFADVCAGPGGFSEYVLWRKKWHAKGFGMTLKGPNDFKLEDFYAAPSELFEPYYGEGGVDGDGDVTRPENITAFRNFILDNTDHKGVHFMMADGGFSVEGQENIQEILSKQLLLCQFLVGLHVIRTGGHFICKTFDLFTPFSVGLIYLLYCCFERVCLFKPLTSRPANSERYVVCRGLKEGIDDVRNYLFNVNRRLNHLRNSDQDVTLVVPLEVLRGDKQFNEYMVRSNESCCEVQIKALAKIHAFVQDSTLSESRQADIRRECLKLWGVPDQARVAPTNTDARTKFFQLIQSQNIEVFGYKPTPLTAKTLEKLIHVFDYRCMVCGSEPKFLLGLGRSQIYTWGGRSNERWTRLDLKTELPRDTLLSVEIVHELKGEGKAQRKISAIHVLDVLFLNGTDVRTQHFTQRIQLAEKFVRAVAKPSRPDMNPIRVKEVYRLEDIEKIFLRLDMKHIKSSGGYLRLSYTGRDDRHFVPCGLYIVKTINEPWSMAYSKSQKRKYFYNSKTKNSQFELPVESIAPFHTCYYERLFWEWGEGVQIHDSQRRDPDSDKLSKDAVLQFIQAHHPCMPSSLTEDR.

The segment at 1–81 (MKRKSDSEQQ…LPDTLAEGSS (81 aa)) is disordered. Positions 2–20 (KRKSDSEQQPSVQCRKKKR) match the Bipartite nuclear localization signal motif. Polar residues predominate over residues 27–45 (NLSSTSDDDTQYSNHGTQE). One can recognise a G-patch domain in the interval 87–133 (YNSVSQKLMAKMGFREGEGLGKFGQGRKEIVETSKQKGRRGLGMVLK). Substrate contacts are provided by residues 203–207 (KSAFD) and Arg218. A RrmJ-type SAM-dependent 2'-O-MTase domain is found at 231-450 (FFLNRAAMKM…ERYVVCRGLK (220 aa)). Position 234 (Asn234) interacts with S-adenosyl-L-methionine. The active site involves Lys239. Residues 277 to 283 (CAGPGGF) and 335 to 336 (DV) contribute to the S-adenosyl-L-methionine site. Residue Asp364 is part of the active site. 374–376 (NIQ) serves as a coordination point for substrate. The Proton acceptor role is filled by Lys404. Asn439 lines the substrate pocket. In terms of domain architecture, WW spans 752–786 (KTINEPWSMAYSKSQKRKYFYNSKTKNSQFELPVE).

Its subcellular location is the nucleus. The enzyme catalyses a 5'-end (N(7)-methyl 5'-triphosphoguanosine)-ribonucleoside in mRNA + S-adenosyl-L-methionine = a 5'-end (N(7)-methyl 5'-triphosphoguanosine)-(2'-O-methyl-ribonucleoside) in mRNA + S-adenosyl-L-homocysteine + H(+). Functionally, S-adenosyl-L-methionine-dependent methyltransferase that mediates mRNA cap1 2'-O-ribose methylation to the 5'-cap structure of mRNAs. Methylates the ribose of the first nucleotide of a m(7)GpppG-capped mRNA and small nuclear RNA (snRNA) to produce m(7)GpppRm (cap1). Displays a preference for cap0 transcripts. Cap1 modification is linked to higher levels of translation. May be involved in the interferon response pathway. This chain is Cap-specific mRNA (nucleoside-2'-O-)-methyltransferase 1 (cmtr1), found in Xenopus laevis (African clawed frog).